We begin with the raw amino-acid sequence, 262 residues long: Hydroxyethylthiazole kinase (262 aa).

Met50 is a binding site for substrate. ATP-binding residues include Arg125 and Thr171. Gly198 serves as a coordination point for substrate.

It belongs to the Thz kinase family. Mg(2+) is required as a cofactor.

It catalyses the reaction 5-(2-hydroxyethyl)-4-methylthiazole + ATP = 4-methyl-5-(2-phosphooxyethyl)-thiazole + ADP + H(+). The protein operates within cofactor biosynthesis; thiamine diphosphate biosynthesis; 4-methyl-5-(2-phosphoethyl)-thiazole from 5-(2-hydroxyethyl)-4-methylthiazole: step 1/1. In terms of biological role, catalyzes the phosphorylation of the hydroxyl group of 4-methyl-5-beta-hydroxyethylthiazole (THZ). The polypeptide is Hydroxyethylthiazole kinase (Shigella boydii serotype 18 (strain CDC 3083-94 / BS512)).